Consider the following 571-residue polypeptide: Proline--tRNA ligase (571 aa).

It belongs to the class-II aminoacyl-tRNA synthetase family. ProS type 1 subfamily. Homodimer.

It is found in the cytoplasm. It catalyses the reaction tRNA(Pro) + L-proline + ATP = L-prolyl-tRNA(Pro) + AMP + diphosphate. Functionally, catalyzes the attachment of proline to tRNA(Pro) in a two-step reaction: proline is first activated by ATP to form Pro-AMP and then transferred to the acceptor end of tRNA(Pro). As ProRS can inadvertently accommodate and process non-cognate amino acids such as alanine and cysteine, to avoid such errors it has two additional distinct editing activities against alanine. One activity is designated as 'pretransfer' editing and involves the tRNA(Pro)-independent hydrolysis of activated Ala-AMP. The other activity is designated 'posttransfer' editing and involves deacylation of mischarged Ala-tRNA(Pro). The misacylated Cys-tRNA(Pro) is not edited by ProRS. The chain is Proline--tRNA ligase from Vibrio vulnificus (strain CMCP6).